A 566-amino-acid chain; its full sequence is NAD-dependent malic enzyme (566 aa).

The Proton donor role is filled by tyrosine 104. Arginine 157 serves as a coordination point for NAD(+). The active-site Proton acceptor is the lysine 175. Residues glutamate 246, aspartate 247, and aspartate 270 each contribute to the a divalent metal cation site. The NAD(+) site is built by aspartate 270 and asparagine 419.

Belongs to the malic enzymes family. Homotetramer. Requires Mg(2+) as cofactor. It depends on Mn(2+) as a cofactor.

The enzyme catalyses (S)-malate + NAD(+) = pyruvate + CO2 + NADH. It catalyses the reaction oxaloacetate + H(+) = pyruvate + CO2. The sequence is that of NAD-dependent malic enzyme from Cronobacter sakazakii (strain ATCC BAA-894) (Enterobacter sakazakii).